Reading from the N-terminus, the 489-residue chain is Betaine aldehyde dehydrogenase (489 aa).

Residues Thr-26 and Asp-93 each coordinate K(+). An NAD(+)-binding site is contributed by 150–152 (GAW). Lys-162 serves as the catalytic Charge relay system. An NAD(+)-binding site is contributed by 176 to 179 (KPSE). Position 180 (Val-180) interacts with K(+). NAD(+) is bound at residue 229–232 (GVET). K(+) is bound at residue Leu-245. Glu-251 serves as the catalytic Proton acceptor. Residues Gly-253, Cys-285, and Glu-386 each contribute to the NAD(+) site. Cys-285 serves as the catalytic Nucleophile. The residue at position 285 (Cys-285) is a Cysteine sulfenic acid (-SOH). Lys-456 and Gly-459 together coordinate K(+). The active-site Charge relay system is Glu-463.

This sequence belongs to the aldehyde dehydrogenase family. In terms of assembly, dimer of dimers. K(+) serves as cofactor.

The enzyme catalyses betaine aldehyde + NAD(+) + H2O = glycine betaine + NADH + 2 H(+). It functions in the pathway amine and polyamine biosynthesis; betaine biosynthesis via choline pathway; betaine from betaine aldehyde: step 1/1. In terms of biological role, involved in the biosynthesis of the osmoprotectant glycine betaine. Catalyzes the irreversible oxidation of betaine aldehyde to the corresponding acid. The polypeptide is Betaine aldehyde dehydrogenase (Burkholderia orbicola (strain AU 1054)).